Reading from the N-terminus, the 217-residue chain is GrpE protein homolog 1, mitochondrial (217 aa).

The N-terminal 27 residues, 1 to 27 (MAARCVRLARGSLPAFALSLRSSPRLL), are a transit peptide targeting the mitochondrion. Lys-94 carries the N6-acetyllysine; alternate modification. An N6-succinyllysine; alternate modification is found at Lys-94. Residue Lys-100 is modified to N6-acetyllysine. At Lys-120 the chain carries N6-succinyllysine. An N6-acetyllysine; alternate modification is found at Lys-215. Lys-215 carries the post-translational modification N6-succinyllysine; alternate.

The protein belongs to the GrpE family. In terms of assembly, probable component of the PAM complex at least composed of a mitochondrial HSP70 protein, GRPEL1 or GRPEL2, TIMM44, TIMM16/PAM16 and TIMM14/DNAJC19. Binds to HSP70, HSC70 and HSJ1B.

It is found in the mitochondrion matrix. Its function is as follows. Essential component of the PAM complex, a complex required for the translocation of transit peptide-containing proteins from the inner membrane into the mitochondrial matrix in an ATP-dependent manner. Seems to control the nucleotide-dependent binding of mitochondrial HSP70 to substrate proteins. The protein is GrpE protein homolog 1, mitochondrial (GRPEL1) of Bos taurus (Bovine).